We begin with the raw amino-acid sequence, 447 residues long: Glutamate--tRNA ligase 2 (447 aa).

The 'HIGH' region signature appears at 8–18; sequence PSPTGYLHVGN. The 'KMSKS' region signature appears at 239-243; that stretch reads KLSKR. K242 contributes to the ATP binding site.

The protein belongs to the class-I aminoacyl-tRNA synthetase family. Glutamate--tRNA ligase type 1 subfamily. Monomer.

It localises to the cytoplasm. It catalyses the reaction tRNA(Glu) + L-glutamate + ATP = L-glutamyl-tRNA(Glu) + AMP + diphosphate. Catalyzes the attachment of glutamate to tRNA(Glu) in a two-step reaction: glutamate is first activated by ATP to form Glu-AMP and then transferred to the acceptor end of tRNA(Glu). This chain is Glutamate--tRNA ligase 2, found in Granulibacter bethesdensis (strain ATCC BAA-1260 / CGDNIH1).